The chain runs to 140 residues: Large ribosomal subunit protein uL11 (140 aa).

The protein belongs to the universal ribosomal protein uL11 family. In terms of assembly, part of the ribosomal stalk of the 50S ribosomal subunit. Interacts with L10 and the large rRNA to form the base of the stalk. L10 forms an elongated spine to which L12 dimers bind in a sequential fashion forming a multimeric L10(L12)X complex. Post-translationally, one or more lysine residues are methylated.

Forms part of the ribosomal stalk which helps the ribosome interact with GTP-bound translation factors. This Geobacter metallireducens (strain ATCC 53774 / DSM 7210 / GS-15) protein is Large ribosomal subunit protein uL11.